The sequence spans 136 residues: Replication enhancer (136 aa).

It belongs to the geminiviridae replication enhancer protein family. In terms of assembly, homooligomer. Interacts with the replication-associated protein (REP). Interacts with host proliferating cell nuclear antigen (PCNA). Interacts with host retinoblastoma-related protein 1 (RBR1), and may thereby deregulate the host cell cycle. Oligomerization and interaction with PCNA are necessary for optimal replication enhancement.

Increases viral DNA accumulation. Enhances infectivity and symptom expression. The polypeptide is Replication enhancer (Beet curly top virus (strain California/Logan) (BCTV)).